The chain runs to 276 residues: Mitochondrial outer membrane protein porin of 36 kDa (276 aa).

This sequence belongs to the eukaryotic mitochondrial porin (TC 1.B.8.1) family.

It is found in the mitochondrion outer membrane. Its function is as follows. Forms a channel through the cell membrane that allows diffusion of small hydrophilic molecules. The channel adopts an open conformation at low or zero membrane potential and a closed conformation at potentials above 30-40 mV. The open state has a weak anion selectivity whereas the closed state is cation-selective. This chain is Mitochondrial outer membrane protein porin of 36 kDa, found in Solanum tuberosum (Potato).